Here is an 88-residue protein sequence, read N- to C-terminus: UPF0297 protein RBAM_024500 (88 aa).

This sequence belongs to the UPF0297 family.

The polypeptide is UPF0297 protein RBAM_024500 (Bacillus velezensis (strain DSM 23117 / BGSC 10A6 / LMG 26770 / FZB42) (Bacillus amyloliquefaciens subsp. plantarum)).